The sequence spans 181 residues: Ribonuclease M5 (181 aa).

In terms of domain architecture, Toprim spans 5 to 88 (KEIIVVEGKD…IKHAYLNTKD (84 aa)). Mg(2+) is bound by residues E11, D57, and D59.

Belongs to the ribonuclease M5 family. The cofactor is Mg(2+).

The protein localises to the cytoplasm. The enzyme catalyses Endonucleolytic cleavage of RNA, removing 21 and 42 nucleotides, respectively, from the 5'- and 3'-termini of a 5S-rRNA precursor.. Functionally, required for correct processing of both the 5' and 3' ends of 5S rRNA precursor. Cleaves both sides of a double-stranded region yielding mature 5S rRNA in one step. This Borreliella burgdorferi (strain ATCC 35210 / DSM 4680 / CIP 102532 / B31) (Borrelia burgdorferi) protein is Ribonuclease M5.